The chain runs to 322 residues: MTASPSKLAQLRELSVVVADTGDYDAIKRLQPVDCTTNPTLVKKALDLPVYADLLERELAWGRAHGGDDRTTTVDEVADRLTIGVGVKLSALVPGRVSTEVDADLAHDTQATIAKARKFVAMYAERGVPKDKILIKIAATWEGIEAARQLQLEGIDCNLTLIFNRAQALACAEANVFLISPFVGRILDYYVAQGQTPASIDEDPGVVFVRTVYNAFKQRGSSTVVMGASFRSTAQIEALAGCDRLTISPDLLEKLDAEHGELPRKLSPGNANNAQITPIDSDSFASGLAADPMATEKLVSGIDTFAKDLHALRKTIADKLAG.

Residue K136 is the Schiff-base intermediate with substrate of the active site.

Belongs to the transaldolase family. Type 1 subfamily. Homodimer.

Its subcellular location is the cytoplasm. The catalysed reaction is D-sedoheptulose 7-phosphate + D-glyceraldehyde 3-phosphate = D-erythrose 4-phosphate + beta-D-fructose 6-phosphate. Its pathway is carbohydrate degradation; pentose phosphate pathway; D-glyceraldehyde 3-phosphate and beta-D-fructose 6-phosphate from D-ribose 5-phosphate and D-xylulose 5-phosphate (non-oxidative stage): step 2/3. Transaldolase is important for the balance of metabolites in the pentose-phosphate pathway. This chain is Transaldolase, found in Xanthomonas oryzae pv. oryzae (strain MAFF 311018).